The primary structure comprises 461 residues: tRNA modification GTPase MnmE (461 aa).

3 residues coordinate (6S)-5-formyl-5,6,7,8-tetrahydrofolate: Arg22, Glu87, and Arg126. One can recognise a TrmE-type G domain in the interval 222–382 (GITAVIAGKP…LENKLYEILI (161 aa)). Asn232 contacts K(+). GTP-binding positions include 232–237 (NVGKSS), 251–257 (TDIPGTT), 276–279 (DTAG), and 363–365 (SAR). Residue Ser236 participates in Mg(2+) binding. Residues Thr251, Ile253, and Thr256 each coordinate K(+). Thr257 serves as a coordination point for Mg(2+). Lys461 lines the (6S)-5-formyl-5,6,7,8-tetrahydrofolate pocket.

The protein belongs to the TRAFAC class TrmE-Era-EngA-EngB-Septin-like GTPase superfamily. TrmE GTPase family. As to quaternary structure, homodimer. Heterotetramer of two MnmE and two MnmG subunits. The cofactor is K(+).

The protein resides in the cytoplasm. Exhibits a very high intrinsic GTPase hydrolysis rate. Involved in the addition of a carboxymethylaminomethyl (cmnm) group at the wobble position (U34) of certain tRNAs, forming tRNA-cmnm(5)s(2)U34. This chain is tRNA modification GTPase MnmE, found in Carboxydothermus hydrogenoformans (strain ATCC BAA-161 / DSM 6008 / Z-2901).